The primary structure comprises 130 residues: Large ribosomal subunit protein bL12 (130 aa).

Belongs to the bacterial ribosomal protein bL12 family. As to quaternary structure, homodimer. Part of the ribosomal stalk of the 50S ribosomal subunit. Forms a multimeric L10(L12)X complex, where L10 forms an elongated spine to which 2 to 4 L12 dimers bind in a sequential fashion. Binds GTP-bound translation factors.

Functionally, forms part of the ribosomal stalk which helps the ribosome interact with GTP-bound translation factors. Is thus essential for accurate translation. This chain is Large ribosomal subunit protein bL12, found in Mycolicibacterium vanbaalenii (strain DSM 7251 / JCM 13017 / BCRC 16820 / KCTC 9966 / NRRL B-24157 / PYR-1) (Mycobacterium vanbaalenii).